A 472-amino-acid chain; its full sequence is Spliceosome-associated protein CWC27 homolog (472 aa).

Residue S2 is modified to N-acetylserine. Positions 11–166 constitute a PPIase cyclophilin-type domain; it reads TNGKVLLKTT…NPHKIKSCEV (156 aa). N109 and N201 each carry an N-linked (GlcNAc...) asparagine glycan. The stretch at 206–230 forms a coiled coil; that stretch reads SFGEEAEEEEEEVNRVSQSMKGKSK. 2 disordered regions span residues 206–386 and 398–472; these read SFGE…DQTL and QAIA…KERR. Positions 231 to 241 are enriched in basic and acidic residues; that stretch reads SSHDLLKDDPH. Acidic residues predominate over residues 257-268; it reads DLVDDGEDESAE. 3 stretches are compositionally biased toward basic and acidic residues: residues 269-286, 304-347, and 359-371; these read HDEYIDGDEKNLMRERIA, EVEK…KRSE, and EYRREKQKYEALR. Positions 306 to 377 form a coiled coil; sequence EKKSVSRSEE…EALRKQQSKK (72 aa). Position 346 is a phosphoserine (S346). A compositionally biased stretch (acidic residues) spans 404–418; it reads PENDIPETEVEDDEG. Basic and acidic residues-rich tracts occupy residues 425 to 437 and 457 to 472; these read QFEDKSRKVKDAS and RREESKKLMREKKERR.

The protein belongs to the cyclophilin-type PPIase family. Part of the activated spliceosome B/catalytic step 1 spliceosome, one of the forms of the spliceosome which has a well-formed active site but still cannot catalyze the branching reaction and is composed at least of 52 proteins, the U2, U5 and U6 snRNAs and the pre-mRNA. Recruited during early steps of activated spliceosome B maturation, it is probably one of the first proteins released from this complex as he matures to the spliceosome C complex. Component of the minor spliceosome, which splices U12-type introns.

The protein resides in the nucleus. Its function is as follows. As part of the spliceosome, plays a role in pre-mRNA splicing. Probable inactive PPIase with no peptidyl-prolyl cis-trans isomerase activity. As a component of the minor spliceosome, involved in the splicing of U12-type introns in pre-mRNAs. In Homo sapiens (Human), this protein is Spliceosome-associated protein CWC27 homolog.